The chain runs to 149 residues: Large ribosomal subunit protein bL9 (149 aa).

Belongs to the bacterial ribosomal protein bL9 family.

Functionally, binds to the 23S rRNA. This chain is Large ribosomal subunit protein bL9, found in Alkaliphilus metalliredigens (strain QYMF).